The primary structure comprises 202 residues: Holliday junction branch migration complex subunit RuvA (202 aa).

The tract at residues 1–64 (MISRLRGTVL…EDAFDLFGFL (64 aa)) is domain I. The segment at 65–143 (TKGEEEVFLL…TIHLEAVSRG (79 aa)) is domain II. The flexible linker stretch occupies residues 143–147 (GTAPA). The interval 148 to 202 (AVSGAHADLVSALLNLGYKQPQAEKAADLASERLGAEATFQALFREALKALRSGG) is domain III.

The protein belongs to the RuvA family. As to quaternary structure, homotetramer. Forms an RuvA(8)-RuvB(12)-Holliday junction (HJ) complex. HJ DNA is sandwiched between 2 RuvA tetramers; dsDNA enters through RuvA and exits via RuvB. An RuvB hexamer assembles on each DNA strand where it exits the tetramer. Each RuvB hexamer is contacted by two RuvA subunits (via domain III) on 2 adjacent RuvB subunits; this complex drives branch migration. In the full resolvosome a probable DNA-RuvA(4)-RuvB(12)-RuvC(2) complex forms which resolves the HJ.

The protein localises to the cytoplasm. Its function is as follows. The RuvA-RuvB-RuvC complex processes Holliday junction (HJ) DNA during genetic recombination and DNA repair, while the RuvA-RuvB complex plays an important role in the rescue of blocked DNA replication forks via replication fork reversal (RFR). RuvA specifically binds to HJ cruciform DNA, conferring on it an open structure. The RuvB hexamer acts as an ATP-dependent pump, pulling dsDNA into and through the RuvAB complex. HJ branch migration allows RuvC to scan DNA until it finds its consensus sequence, where it cleaves and resolves the cruciform DNA. This is Holliday junction branch migration complex subunit RuvA from Myxococcus xanthus (strain DK1622).